The sequence spans 197 residues: Nascent polypeptide-associated complex subunit alpha (197 aa).

A compositionally biased stretch (acidic residues) spans 1–20 (MAEPVEDSVDEISSEGDSDV). Disordered regions lie at residues 1–46 (MAEP…RKLL) and 120–154 (GADR…SKAD). Residues 36-101 (DKNERKSRKL…AKVEDMSQNS (66 aa)) enclose the NAC-A/B domain. The span at 134–154 (SGHDHAHDHDHSHGDCASKAD) shows a compositional bias: basic and acidic residues. Residues 158 to 195 (VNQSDIDLVVSQVGCTREQAVEALIKNKGDIVETIMQL) form the UBA domain.

It belongs to the NAC-alpha family.

Its function is as follows. May promote appropriate targeting of ribosome-nascent polypeptide complexes. The chain is Nascent polypeptide-associated complex subunit alpha from Babesia divergens.